The sequence spans 215 residues: Phosphoserine phosphatase (215 aa).

The active-site Nucleophile is the Asp11. Positions 11 and 13 each coordinate Mg(2+). Asp13 (proton donor) is an active-site residue. Substrate is bound by residues Glu20, Arg56, 99-100 (SG), and Lys144. Asp167 provides a ligand contact to Mg(2+). Asn170 is a binding site for substrate.

It belongs to the HAD-like hydrolase superfamily. SerB family. Mg(2+) is required as a cofactor.

The catalysed reaction is O-phospho-L-serine + H2O = L-serine + phosphate. It carries out the reaction O-phospho-D-serine + H2O = D-serine + phosphate. It functions in the pathway amino-acid biosynthesis; L-serine biosynthesis; L-serine from 3-phospho-D-glycerate: step 3/3. In Streptococcus thermophilus (strain ATCC BAA-250 / LMG 18311), this protein is Phosphoserine phosphatase.